Here is an 851-residue protein sequence, read N- to C-terminus: DNA mismatch repair protein MutS (851 aa).

Residue 602-609 coordinates ATP; that stretch reads GPNMSGKS.

Belongs to the DNA mismatch repair MutS family.

This protein is involved in the repair of mismatches in DNA. It is possible that it carries out the mismatch recognition step. This protein has a weak ATPase activity. The chain is DNA mismatch repair protein MutS from Streptococcus pyogenes serotype M49 (strain NZ131).